The sequence spans 338 residues: Ribosomal RNA small subunit methyltransferase H (338 aa).

S-adenosyl-L-methionine is bound by residues 53-55, D72, Y99, D123, and Q130; that span reads GGH. A disordered region spans residues 277-298; it reads ITPRSKSKSPEGLPVELPGMGP.

This sequence belongs to the methyltransferase superfamily. RsmH family.

It localises to the cytoplasm. It catalyses the reaction cytidine(1402) in 16S rRNA + S-adenosyl-L-methionine = N(4)-methylcytidine(1402) in 16S rRNA + S-adenosyl-L-homocysteine + H(+). In terms of biological role, specifically methylates the N4 position of cytidine in position 1402 (C1402) of 16S rRNA. This Rhodococcus opacus (strain B4) protein is Ribosomal RNA small subunit methyltransferase H.